We begin with the raw amino-acid sequence, 367 residues long: UDP-N-acetylglucosamine--N-acetylmuramyl-(pentapeptide) pyrophosphoryl-undecaprenol N-acetylglucosamine transferase (367 aa).

UDP-N-acetyl-alpha-D-glucosamine is bound by residues 15-17 (TGG), Asn126, Arg169, Ser197, and Gln298.

It belongs to the glycosyltransferase 28 family. MurG subfamily.

It localises to the cell inner membrane. It carries out the reaction di-trans,octa-cis-undecaprenyl diphospho-N-acetyl-alpha-D-muramoyl-L-alanyl-D-glutamyl-meso-2,6-diaminopimeloyl-D-alanyl-D-alanine + UDP-N-acetyl-alpha-D-glucosamine = di-trans,octa-cis-undecaprenyl diphospho-[N-acetyl-alpha-D-glucosaminyl-(1-&gt;4)]-N-acetyl-alpha-D-muramoyl-L-alanyl-D-glutamyl-meso-2,6-diaminopimeloyl-D-alanyl-D-alanine + UDP + H(+). Its pathway is cell wall biogenesis; peptidoglycan biosynthesis. Cell wall formation. Catalyzes the transfer of a GlcNAc subunit on undecaprenyl-pyrophosphoryl-MurNAc-pentapeptide (lipid intermediate I) to form undecaprenyl-pyrophosphoryl-MurNAc-(pentapeptide)GlcNAc (lipid intermediate II). This is UDP-N-acetylglucosamine--N-acetylmuramyl-(pentapeptide) pyrophosphoryl-undecaprenol N-acetylglucosamine transferase from Bradyrhizobium sp. (strain BTAi1 / ATCC BAA-1182).